The primary structure comprises 312 residues: Olfactory receptor 2L8 (312 aa).

At 1 to 24 (MENYNQTSTDFILLGLFPPSRIDL) the chain is on the extracellular side. N-linked (GlcNAc...) asparagine glycosylation occurs at Asn5. Residues 25–48 (FFFILIVFIFLMALIGNLSMILLI) traverse the membrane as a helical segment. At 49–56 (FLDTHLHT) the chain is on the cytoplasmic side. A helical transmembrane segment spans residues 57-78 (PMYFLLSQLSLIDLNYISTIVP). Residues 79–99 (KMASDFLHGNKSISFTGCGIQ) are Extracellular-facing. An N-linked (GlcNAc...) asparagine glycan is attached at Asn88. A disulfide bridge links Cys96 with Cys188. Residues 100 to 119 (SFFFLALGGAEALLLASMAY) form a helical membrane-spanning segment. The Cytoplasmic segment spans residues 120 to 138 (DRYIAICFPLHYLIRMSKR). The helical transmembrane segment at 139 to 157 (VCVLMITGSWIIGSINACA) threads the bilayer. Residues 158-194 (HTVYVLHIPYCRSRAINHFFCDVPAMVTLACMDTWVY) are Extracellular-facing. The helical transmembrane segment at 195–218 (EGTVFLSATIFLVFPFIGISCSYG) threads the bilayer. The Cytoplasmic segment spans residues 219-235 (QVLFAVYHMKSAEGRKK). The helical transmembrane segment at 236 to 258 (AYLTCSTHLTVVTFYYAPFVYTY) threads the bilayer. At 259 to 271 (LRPRSLRSPTEDK) the chain is on the extracellular side. The helical transmembrane segment at 272-291 (VLAVFYTILTPMLNPIIYSL) threads the bilayer. Residues 292–312 (RNKEVMGALTRVSQRICSVKM) lie on the Cytoplasmic side of the membrane.

It belongs to the G-protein coupled receptor 1 family.

It is found in the cell membrane. In terms of biological role, odorant receptor. The protein is Olfactory receptor 2L8 (OR2L8) of Homo sapiens (Human).